A 642-amino-acid polypeptide reads, in one-letter code: Extracellular metalloproteinase 4 (642 aa).

The first 18 residues, 1–18, serve as a signal peptide directing secretion; sequence MHGLLLAGLLALPLNVLA. The propeptide occupies 19-253; the sequence is HPTESHSSGI…VHSVVDYVSA (235 aa). Positions 49-60 are enriched in polar residues; the sequence is SDSLTGQDGQSF. The interval 49–72 is disordered; that stretch reads SDSLTGQDGQSFTASSADADTSSG. Low complexity predominate over residues 61-71; it reads TASSADADTSS. Residue Asn419 is glycosylated (N-linked (GlcNAc...) asparagine). Residue His436 coordinates Zn(2+). The active site involves Glu437. A Zn(2+)-binding site is contributed by His440. N-linked (GlcNAc...) asparagine glycans are attached at residues Asn509 and Asn602.

This sequence belongs to the peptidase M36 family. Zn(2+) serves as cofactor.

Its subcellular location is the secreted. Functionally, secreted metalloproteinase that allows assimilation of proteinaceous substrates and probably acts as a virulence factor. The sequence is that of Extracellular metalloproteinase 4 (MEP4) from Arthroderma gypseum (strain ATCC MYA-4604 / CBS 118893) (Microsporum gypseum).